Consider the following 264-residue polypeptide: Apolipoprotein A-I (264 aa).

Positions 1 to 18 (MRGVLVTLAVLFLTGTQA) are cleaved as a signal peptide. Tandem repeats lie at residues 67–88 (LKLA…EDMT) and 89–110 (PYYR…AELT). A 10 X approximate tandem repeats region spans residues 67–264 (LKLADNLDTL…LLDEVQKTMA (198 aa)). Residues 111–121 (KDLEEVKEKIR) form a 3; half-length repeat. Repeat copies occupy residues 122–143 (PFLD…QRLA), 144–165 (PVAQ…AKLT), 166–187 (PVAE…KNLA), 188–209 (PYSS…ERGI), and 210–231 (PQAS…EKMT). A 9; half-length repeat occupies 232-242 (PLVQEFKERLT). The stretch at 243–264 (PYAENLKNRLIDLLDEVQKTMA) is repeat 10.

The protein belongs to the apolipoprotein A1/A4/E family. As to expression, major protein of VLDL, HDL, LDL and in chylomicrons. Expressed in a number of tissues including liver, small intestine, lung, kidney, heart and muscle with highest expression in liver and small intestine.

It is found in the secreted. Participates in the reverse transport of cholesterol from tissues to the liver for excretion by promoting cholesterol efflux from tissues and by acting as a cofactor for the lecithin cholesterol acyltransferase (LCAT). The polypeptide is Apolipoprotein A-I (APOA1) (Coturnix japonica (Japanese quail)).